The primary structure comprises 587 residues: Beta-(1--&gt;2)glucan export ATP-binding/permease protein NdvA (587 aa).

The ABC transmembrane type-1 domain maps to 21–301; sequence VSLVVIANIV…MRQFATQIFE (281 aa). 6 consecutive transmembrane segments (helical) span residues 23–43, 57–77, 126–146, 158–178, 248–268, and 272–292; these read LVVI…ILFG, PILF…VLVS, LFGL…ALAL, LSAV…VVMS, MAST…VQSG, and IGDV…LDLM. Residues 335–569 form the ABC transporter domain; the sequence is IEFRDVSFGF…NGRFAALLRA (235 aa). Residue 368–375 coordinates ATP; the sequence is GPTGAGKT.

This sequence belongs to the ABC transporter superfamily. Beta-(1--&gt;2)glucan exporter (TC 3.A.1.108.1) family. Homodimer.

The protein localises to the cell inner membrane. The enzyme catalyses [(1-&gt;2)-beta-D-glucosyl](n)(in) + ATP + H2O = [(1-&gt;2)-beta-D-glucosyl](n)(out) + ADP + phosphate + H(+). In terms of biological role, involved in beta-(1--&gt;2)glucan export. Transmembrane domains (TMD) form a pore in the inner membrane and the ATP-binding domain (NBD) is responsible for energy generation. This is Beta-(1--&gt;2)glucan export ATP-binding/permease protein NdvA from Rhizobium etli (strain ATCC 51251 / DSM 11541 / JCM 21823 / NBRC 15573 / CFN 42).